A 463-amino-acid chain; its full sequence is L-seryl-tRNA(Sec) selenium transferase (463 aa).

The residue at position 295 (Lys-295) is an N6-(pyridoxal phosphate)lysine.

It belongs to the SelA family. Homodecamer; pentamer of dimers. Binds only one seryl-tRNA(Sec) per dimer. Requires pyridoxal 5'-phosphate as cofactor.

It is found in the cytoplasm. The enzyme catalyses L-seryl-tRNA(Sec) + selenophosphate + H(+) = L-selenocysteinyl-tRNA(Sec) + phosphate. The protein operates within aminoacyl-tRNA biosynthesis; selenocysteinyl-tRNA(Sec) biosynthesis; selenocysteinyl-tRNA(Sec) from L-seryl-tRNA(Sec) (bacterial route): step 1/1. Functionally, converts seryl-tRNA(Sec) to selenocysteinyl-tRNA(Sec) required for selenoprotein biosynthesis. The sequence is that of L-seryl-tRNA(Sec) selenium transferase from Shigella dysenteriae serotype 1 (strain Sd197).